The sequence spans 155 residues: uncharacterized protein (155 aa).

Positions Leu6 to Leu155 constitute an N-acetyltransferase domain. Residues Ile69 to Val71, Lys77 to Lys82, and Gln111 to Lys117 each bind CoA.

Functionally, probable N-acetyltransferase. This is an uncharacterized protein from Bacillus subtilis (strain 168).